The sequence spans 603 residues: MNPQLLRVTNRIIERSRETRSAYLARIEQAKTSTVHRSQLACGNLAHGFAACQPEDKASLKSMLRNNIAIITSYNDMLSAHQPYEHYPEIIRKALHEANAVGQVAGGVPAMCDGVTQGQDGMELSLLSREVIAMSAAVGLSHNMFDGALFLGVCDKIVPGLTMAALSFGHLPAVFVPSGPMASGLPNKEKVRIRQLYAEGKVDRMALLESEAASYHAPGTCTFYGTANTNQMVVEFMGMQLPGSSFVHPDSPLRDALTAAAARQVTRMTGNGNEWMPIGKMIDEKVVVNGIVALLATGGSTNHTMHLVAMARAAGIQINWDDFSDLSDVVPLMARLYPNGPADINHFQAAGGVPVLVRELLKAGLLHEDVNTVAGFGLSRYTLEPWLNNGELDWREGAEKSLDSNVIASFEQPFSHHGGTKVLSGNLGRAVMKTSAVPVENQVIEAPAVVFESQHDVMPAFEAGLLDRDCVVVVRHQGPKANGMPELHKLMPPLGVLLDRCFKIALVTDGRLSGASGKVPSAIHVTPEAYDGGLLAKVRDGDIIRVNGQTGELTLLVDEAELAAREPHIPDLSASRVGTGRELFSALREKLSGAEQGATCITF.

[4Fe-4S] cluster contacts are provided by Cys154 and Cys221.

This sequence belongs to the IlvD/Edd family. [4Fe-4S] cluster is required as a cofactor.

It carries out the reaction 6-phospho-D-gluconate = 2-dehydro-3-deoxy-6-phospho-D-gluconate + H2O. Its pathway is carbohydrate metabolism; Entner-Doudoroff pathway. Functionally, catalyzes the dehydration of 6-phospho-D-gluconate to 2-dehydro-3-deoxy-6-phospho-D-gluconate. The sequence is that of Phosphogluconate dehydratase from Escherichia coli O157:H7.